A 226-amino-acid polypeptide reads, in one-letter code: Orotidine 5'-phosphate decarboxylase (226 aa).

Residues aspartate 8, lysine 30, 58-67 (DLKLYDIPNT), threonine 117, arginine 177, glutamine 186, glycine 206, and arginine 207 contribute to the substrate site. The active-site Proton donor is lysine 60.

This sequence belongs to the OMP decarboxylase family. Type 1 subfamily. Homodimer.

It catalyses the reaction orotidine 5'-phosphate + H(+) = UMP + CO2. The protein operates within pyrimidine metabolism; UMP biosynthesis via de novo pathway; UMP from orotate: step 2/2. In terms of biological role, catalyzes the decarboxylation of orotidine 5'-monophosphate (OMP) to uridine 5'-monophosphate (UMP). The sequence is that of Orotidine 5'-phosphate decarboxylase from Campylobacter concisus (strain 13826).